We begin with the raw amino-acid sequence, 143 residues long: MAIYGIGTDLAQVSRIAAVLERTGGRFAEKVLGPDELRVFHARRARSEARGIAFLATRFSAKEAFSKAIGLGMHWPMTWRALQTLNRPSGEPYVVASGELAAWLDARGITARVTVSDERDYAVTFVVAEAPDHVAAARSGAAS.

Residues Asp-9 and Glu-63 each coordinate Mg(2+).

Belongs to the P-Pant transferase superfamily. AcpS family. Requires Mg(2+) as cofactor.

Its subcellular location is the cytoplasm. The catalysed reaction is apo-[ACP] + CoA = holo-[ACP] + adenosine 3',5'-bisphosphate + H(+). Transfers the 4'-phosphopantetheine moiety from coenzyme A to a Ser of acyl-carrier-protein. This chain is Holo-[acyl-carrier-protein] synthase, found in Burkholderia pseudomallei (strain 1106a).